A 337-amino-acid polypeptide reads, in one-letter code: Molybdate import system permease protein MolB (337 aa).

Topologically, residues 1–5 (MQPDS) are cytoplasmic. Residues 6–25 (YPKILFGLTLLLVITAVISL) traverse the membrane as a helical segment. At 26-51 (GIGRYSLSVPQIGQILWAKATALEID) the chain is on the periplasmic side. The chain crosses the membrane as a helical span at residues 52-87 (PVQQQVIFQVRLPRILTALCVGAGLALSGVVLQGIF). Residues 88–98 (RNPLVNPHIIG) are Cytoplasmic-facing. A helical membrane pass occupies residues 99 to 113 (VTSGSAFGGTLAIFF). At 114–116 (GFS) the chain is on the periplasmic side. The chain crosses the membrane as a helical span at residues 117–140 (LYGLFTSTILFGFGTLALVFLFSF). The Cytoplasmic segment spans residues 141–146 (KFNQRS). Residues 147–171 (LLMLILIGMILSGLFSALVSLLQYI) form a helical membrane-spanning segment. At 172–193 (SDTEEKLPSIVFWLMGSFATSN) the chain is on the periplasmic side. Residues 194–214 (WEKLLFFFVPFLLCSSILLSL) traverse the membrane as a helical segment. Residues 215 to 234 (SWRLNLLSLDEKEAKALGVK) lie on the Cytoplasmic side of the membrane. A helical transmembrane segment spans residues 235 to 257 (MAPLRWLVIFLSGSLVACQVAIS). The Periplasmic segment spans residues 258–264 (GSIGWVG). Residues 265–275 (LIIPHLSRMLV) traverse the membrane as a helical segment. The Cytoplasmic segment spans residues 276–278 (GAN). The chain crosses the membrane as a helical span at residues 279-304 (HQSLLPCTMLVGATYMLLVDNVARSL). Over 305 to 310 (SDAEIP) the chain is Periplasmic. The chain crosses the membrane as a helical span at residues 311–329 (ISILTALIGAPLFGVLVYK). Topologically, residues 330–337 (LKRGGMNE) are cytoplasmic.

Belongs to the binding-protein-dependent transport system permease family. FecCD subfamily. As to quaternary structure, the complex is composed of two ATP-binding proteins (MolC), two transmembrane proteins (MolB) and a solute-binding protein (MolA).

The protein localises to the cell inner membrane. Its activity is regulated as follows. The MolBCA complex shows a decrease in affinity in the presence of increasing concentrations of substrate and nucleotide. Functionally, part of the ABC transporter complex MolBCA involved in molybdate import. Responsible for the translocation of the substrate across the membrane. Functions as a low-affinity molybdate transporter. The protein is Molybdate import system permease protein MolB of Haemophilus influenzae (strain ATCC 51907 / DSM 11121 / KW20 / Rd).